The sequence spans 483 residues: Cytochrome P450 monooxygenase stcF (483 aa).

Cysteine 424 contributes to the heme binding site.

It belongs to the cytochrome P450 family. The cofactor is heme.

It functions in the pathway mycotoxin biosynthesis; sterigmatocystin biosynthesis. Its function is as follows. Cytochrome P450 monooxygenase; part of the gene cluster that mediates the biosynthesis of sterigmatocystin (ST), a polyketide-derived furanocoumarin which is part of the most toxic and carcinogenic compounds among the known mycotoxins. The first step in the biosynthesis of sterigmatocystin is the production of hexanoate by the fatty acid synthase (FAS) units stcJ and stcK. The polyketide backbone is assembled by the non-reducing polyketide synthase stcA by condensation of the starter hexanoyl-CoA and 7 malonyl-CoA extender units followed by cyclization and release of norsolorinic acid. Norsolorinic acid is the first stable intermediate in the biosynthesis of sterigmatocystin and is converted into averantin (AVN) by the ketoreductase stcE which reduces the hexanoate ketone to an alcohol. Averantin is then oxidized into 5'-hydroxyaverantin (HAVN) by the cytochrome P450 monooxygenase stcF. 5'-hydroxyaverantin is further converted to 5'-oxyaverantin (OAVN) by the 5'-hydroxyaverantin dehydrogenase stcG. The next step is the conversion of OAVN into averufin (AVF) which is catalyzed by a yet to be identified enzyme. The cytochrome P450 monooxygenase stcB and the flavin-binding monooxygenase stcW are both required for the conversion of averufin to 1-hydroxyversicolorone. The esterase stcI probably catalyzes the formation of versiconal hemiacetal acetate from 1-hydroxyversicolorone. The oxydoreductase stcN then probably catalyzes the biosynthetic step from versiconal to versicolorin B (VERB). The next step is performed by the versicolorin B desaturase stcL to produce versicolorin A (VERA). The ketoreductase stcU and the cytochrome P450 monooxygenase stcS are involved in the conversion of versicolorin A to demethylsterigmatocystin. The Baeyer-Villiger oxidas stcQ and the reductase stcR might be involved in the biosynthetic step from versicolorin A to demethylsterigmatocystin. The final step in the biosynthesis of sterigmatocystin is the methylation of demethylsterigmatocystin catalyzed by the methyltransferase stcP. The protein is Cytochrome P450 monooxygenase stcF of Emericella nidulans (strain FGSC A4 / ATCC 38163 / CBS 112.46 / NRRL 194 / M139) (Aspergillus nidulans).